We begin with the raw amino-acid sequence, 554 residues long: Chaperonin GroEL (554 aa).

Residues 29 to 32 (TLGP), Lys50, 86 to 90 (DGTTT), Gly418, and Asp499 contribute to the ATP site. A disordered region spans residues 528–554 (HEEDNNTNRSGGGVGGGHHGGMGGMDF). Over residues 537-554 (SGGGVGGGHHGGMGGMDF) the composition is skewed to gly residues.

This sequence belongs to the chaperonin (HSP60) family. In terms of assembly, forms a cylinder of 14 subunits composed of two heptameric rings stacked back-to-back. Interacts with the co-chaperonin GroES.

The protein localises to the cytoplasm. It carries out the reaction ATP + H2O + a folded polypeptide = ADP + phosphate + an unfolded polypeptide.. In terms of biological role, together with its co-chaperonin GroES, plays an essential role in assisting protein folding. The GroEL-GroES system forms a nano-cage that allows encapsulation of the non-native substrate proteins and provides a physical environment optimized to promote and accelerate protein folding. The sequence is that of Chaperonin GroEL from Orientia tsutsugamushi (strain Boryong) (Rickettsia tsutsugamushi).